We begin with the raw amino-acid sequence, 964 residues long: Translation initiation factor IF-2 (964 aa).

A disordered region spans residues 49-357 (QIGSAEPADD…QEFDEMQAPL (309 aa)). A compositionally biased stretch (low complexity) spans 62-85 (AKPAARKSQTSSKKTSKETTTAKP). Over residues 86 to 102 (APGPKPGPGPKPTPGPR) the composition is skewed to pro residues. Positions 103-117 (PGSSSGPKPGRSSAA) are enriched in low complexity. Pro residues predominate over residues 159–169 (PHAPAPKPKPG). 2 stretches are compositionally biased toward low complexity: residues 190–212 (GLPS…APRP) and 242–251 (GQGERMPRPG). Gly residues-rich tracts occupy residues 252 to 261 (GSQGSRGGSG) and 284 to 334 (GRGG…GRGG). Over residues 335–346 (GGRRGRKSRKQR) the composition is skewed to basic residues. The 172-residue stretch at 458–629 (ARPPVVTVMG…AIVLTADAAL (172 aa)) folds into the tr-type G domain. A G1 region spans residues 467–474 (GHVDHGKT). A GTP-binding site is contributed by 467–474 (GHVDHGKT). Positions 492–496 (GITQA) are G2. Positions 517–520 (DTPG) are G3. GTP-binding positions include 517–521 (DTPGH) and 571–574 (NKID). A G4 region spans residues 571–574 (NKID). Residues 607-609 (SAR) are G5.

Belongs to the TRAFAC class translation factor GTPase superfamily. Classic translation factor GTPase family. IF-2 subfamily.

The protein resides in the cytoplasm. In terms of biological role, one of the essential components for the initiation of protein synthesis. Protects formylmethionyl-tRNA from spontaneous hydrolysis and promotes its binding to the 30S ribosomal subunits. Also involved in the hydrolysis of GTP during the formation of the 70S ribosomal complex. The chain is Translation initiation factor IF-2 from Cutibacterium acnes (strain DSM 16379 / KPA171202) (Propionibacterium acnes).